The following is a 339-amino-acid chain: Ribosomal RNA small subunit methyltransferase C (339 aa).

Belongs to the methyltransferase superfamily. RsmC family. As to quaternary structure, monomer.

The protein resides in the cytoplasm. It catalyses the reaction guanosine(1207) in 16S rRNA + S-adenosyl-L-methionine = N(2)-methylguanosine(1207) in 16S rRNA + S-adenosyl-L-homocysteine + H(+). In terms of biological role, specifically methylates the guanine in position 1207 of 16S rRNA in the 30S particle. This is Ribosomal RNA small subunit methyltransferase C from Aliivibrio fischeri (strain MJ11) (Vibrio fischeri).